The following is a 329-amino-acid chain: Probable endo-beta-1,4-glucanase B (329 aa).

Residues 1–18 form the signal peptide; the sequence is MKFGSIVLIAAAAGSAVA. Residues Asn33 and Asn96 are each glycosylated (N-linked (GlcNAc...) asparagine). Glu156 (proton donor) is an active-site residue. Glu263 serves as the catalytic Nucleophile.

Belongs to the glycosyl hydrolase 5 (cellulase A) family.

The protein localises to the secreted. It carries out the reaction Endohydrolysis of (1-&gt;4)-beta-D-glucosidic linkages in cellulose, lichenin and cereal beta-D-glucans.. In terms of biological role, has endoglucanase activity on substrates containing beta-1,4 glycosidic bonds, like in carboxymethylcellulose (CMC), hydroxyethylcellulose (HEC) and beta-glucan. Involved in the degradation of complex natural cellulosic substrates. This chain is Probable endo-beta-1,4-glucanase B (eglB), found in Neosartorya fischeri (strain ATCC 1020 / DSM 3700 / CBS 544.65 / FGSC A1164 / JCM 1740 / NRRL 181 / WB 181) (Aspergillus fischerianus).